A 329-amino-acid chain; its full sequence is Malate dehydrogenase (329 aa).

NAD(+) is bound at residue 12-18 (GAAGQIG). Substrate is bound by residues arginine 95 and arginine 101. Residues asparagine 108, glutamine 115, and 132 to 134 (VGN) contribute to the NAD(+) site. Substrate contacts are provided by asparagine 134 and arginine 165. Histidine 190 (proton acceptor) is an active-site residue.

The protein belongs to the LDH/MDH superfamily. MDH type 2 family.

The catalysed reaction is (S)-malate + NAD(+) = oxaloacetate + NADH + H(+). Its function is as follows. Catalyzes the reversible oxidation of malate to oxaloacetate. This Herminiimonas arsenicoxydans protein is Malate dehydrogenase.